Consider the following 545-residue polypeptide: Inosine-5'-monophosphate dehydrogenase (545 aa).

2 consecutive CBS domains span residues 138–194 (MITD…DYDT) and 201–258 (MTKE…PDAT). NAD(+) contacts are provided by residues Asp-295 and 347 to 349 (GIG). Gly-349 and Gly-351 together coordinate K(+). Ser-352 is a binding site for IMP. K(+) is bound at residue Cys-354. The active-site Thioimidate intermediate is the Cys-354. IMP is bound by residues 387-389 (DGG), 410-411 (GG), and 434-438 (YRGMG). Arg-455 serves as the catalytic Proton acceptor. Residue Glu-470 coordinates IMP. Residues Glu-524, Ser-525, and His-526 each coordinate K(+).

The protein belongs to the IMPDH/GMPR family. Homotetramer. Requires K(+) as cofactor.

It catalyses the reaction IMP + NAD(+) + H2O = XMP + NADH + H(+). It functions in the pathway purine metabolism; XMP biosynthesis via de novo pathway; XMP from IMP: step 1/1. Mycophenolic acid (MPA) is a non-competitive inhibitor that prevents formation of the closed enzyme conformation by binding to the same site as the amobile flap. In contrast, mizoribine monophosphate (MZP) is a competitive inhibitor that induces the closed conformation. MPA is a potent inhibitor of mammalian IMPDHs but a poor inhibitor of the bacterial enzymes. MZP is a more potent inhibitor of bacterial IMPDH. Catalyzes the conversion of inosine 5'-phosphate (IMP) to xanthosine 5'-phosphate (XMP), the first committed and rate-limiting step in the de novo synthesis of guanine nucleotides, and therefore plays an important role in the regulation of cell growth. This Bifidobacterium longum (strain NCC 2705) protein is Inosine-5'-monophosphate dehydrogenase.